The following is a 90-amino-acid chain: uncharacterized protein (90 aa).

Residues 1–26 are disordered; it reads MFKRSVSRLFCAPAPAPAPRKQPGGR. Residues 33 to 66 adopt a coiled-coil conformation; that stretch reads NLNQSVKKQLNHLEVLERIKKQRKEQKNNRNQVD.

This is an uncharacterized protein from Dictyostelium discoideum (Social amoeba).